Reading from the N-terminus, the 447-residue chain is uncharacterized protein (447 aa).

The segment at 39 to 76 (PQAAPYTRNNGMGECRRGHRQGHRAEVHDNRPADKVGQ) is disordered. Positions 61–72 (HRAEVHDNRPAD) are enriched in basic and acidic residues.

It belongs to the 3-oxoacid CoA-transferase subunit A family.

This is an uncharacterized protein from Archaeoglobus fulgidus (strain ATCC 49558 / DSM 4304 / JCM 9628 / NBRC 100126 / VC-16).